A 699-amino-acid chain; its full sequence is Polyribonucleotide nucleotidyltransferase (699 aa).

The Mg(2+) site is built by Asp485 and Asp491. A KH domain is found at 552–611 (PRITTIKINPEKIRDVIGKGGAVIRALTEETGTTIELEDDGTVKIASNNGDATREAIRRI). The region spanning 621–689 (GRLYTGKVIR…RQGRVRLSIK (69 aa)) is the S1 motif domain.

Belongs to the polyribonucleotide nucleotidyltransferase family. In terms of assembly, component of the RNA degradosome, which is a multiprotein complex involved in RNA processing and mRNA degradation. It depends on Mg(2+) as a cofactor.

The protein resides in the cytoplasm. It catalyses the reaction RNA(n+1) + phosphate = RNA(n) + a ribonucleoside 5'-diphosphate. Its function is as follows. Involved in mRNA degradation. Catalyzes the phosphorolysis of single-stranded polyribonucleotides processively in the 3'- to 5'-direction. In Shewanella amazonensis (strain ATCC BAA-1098 / SB2B), this protein is Polyribonucleotide nucleotidyltransferase.